An 858-amino-acid polypeptide reads, in one-letter code: Translation initiation factor IF-2 (858 aa).

The tract at residues 49 to 271 (TTTVTHPKSQ…NKPAPVRKDK (223 aa)) is disordered. The span at 80–226 (NQQQSNSRHQ…RFGGSLNSNN (147 aa)) shows a compositional bias: low complexity. Positions 239-256 (NRRRNNRNNKSRNNKNQR) are enriched in basic residues. One can recognise a tr-type G domain in the interval 359–528 (PRAPVVTVMG…LLQSEVLELT (170 aa)). Residues 368-375 (GHVDHGKT) are G1. 368 to 375 (GHVDHGKT) is a GTP binding site. The tract at residues 393 to 397 (GITQA) is G2. Residues 414 to 417 (DTPG) are G3. Residues 414–418 (DTPGH) and 468–471 (NKID) contribute to the GTP site. Residues 468 to 471 (NKID) are G4. Residues 504-506 (SAK) form a G5 region.

It belongs to the TRAFAC class translation factor GTPase superfamily. Classic translation factor GTPase family. IF-2 subfamily.

The protein resides in the cytoplasm. In terms of biological role, one of the essential components for the initiation of protein synthesis. Protects formylmethionyl-tRNA from spontaneous hydrolysis and promotes its binding to the 30S ribosomal subunits. Also involved in the hydrolysis of GTP during the formation of the 70S ribosomal complex. The polypeptide is Translation initiation factor IF-2 (Lactiplantibacillus plantarum (strain ATCC BAA-793 / NCIMB 8826 / WCFS1) (Lactobacillus plantarum)).